A 937-amino-acid chain; its full sequence is Chromatin assembly factor 1 subunit A (937 aa).

Residues 21–69 (RLPFKRLNPVPKEKHDAEAEGKKGKCSKSGLGQSKDSSTDTLHASTDNM) are disordered. Positions 31–43 (PKEKHDAEAEGKK) are enriched in basic and acidic residues. The segment covering 59-69 (TDTLHASTDNM) has biased composition (polar residues). Positions 213–226 (FEGKMPVVLLEDIM) match the PxVxL motif motif. 5 disordered regions span residues 250 to 386 (SHEG…EKRK), 574 to 614 (VDSD…IPHG), 753 to 778 (GDTS…VPSK), 831 to 851 (SGKE…TPVS), and 910 to 937 (TVTE…SNTV). Residues 255 to 269 (SVLTNSSLSSLSVSS) are compositionally biased toward low complexity. A compositionally biased stretch (basic and acidic residues) spans 301–386 (SSAEKEKLRL…KLRVKEEKRK (86 aa)). Acidic residues-rich tracts occupy residues 574 to 586 (VDSD…EEPG) and 594 to 608 (GDDE…DDDG). Residues 756–766 (SPVSPNTSRPQ) are compositionally biased toward polar residues.

This sequence belongs to the CHAF1A family. Subunit of the CAF-1 complex that contains RBBP4, CHAF1B and CHAF1A. Interacts with CHAF1B, PCNA and RBBP4.

Its subcellular location is the nucleus. Acts as a component of the histone chaperone complex chromatin assembly factor 1 (CAF-1), which assembles histone octamers onto DNA during replication and repair. CAF-1 performs the first step of the nucleosome assembly process, bringing newly synthesized histones H3 and H4 to replicating DNA; histones H2A/H2B can bind to this chromatin precursor subsequent to DNA replication to complete the histone octamer. This Gallus gallus (Chicken) protein is Chromatin assembly factor 1 subunit A (CHAF1A).